The primary structure comprises 689 residues: Methionine--tRNA ligase (689 aa).

Positions 15-25 match the 'HIGH' region motif; that stretch reads PYANGPIHLGH. Positions 146, 149, 159, and 162 each coordinate Zn(2+). Residues 332 to 336 carry the 'KMSKS' region motif; sequence KMSKS. Lys335 is a binding site for ATP. A tRNA-binding domain is found at 588–689; it reads DFAKIDLRIA…EGAQPGMRVK (102 aa).

The protein belongs to the class-I aminoacyl-tRNA synthetase family. MetG type 1 subfamily. In terms of assembly, homodimer. Requires Zn(2+) as cofactor.

The protein resides in the cytoplasm. The enzyme catalyses tRNA(Met) + L-methionine + ATP = L-methionyl-tRNA(Met) + AMP + diphosphate. Functionally, is required not only for elongation of protein synthesis but also for the initiation of all mRNA translation through initiator tRNA(fMet) aminoacylation. In Shewanella sp. (strain W3-18-1), this protein is Methionine--tRNA ligase.